Reading from the N-terminus, the 198-residue chain is uncharacterized protein (198 aa).

The next 4 membrane-spanning stretches (helical) occupy residues 20–40 (VIVGVVLGLAGTGALIGGLWA), 70–90 (FFVAPCLMLGLLTVLAVTASV), 107–127 (LAIGLMICAATAAAVGALLVW), and 164–184 (VAATVLWPAGIAALVYAVLAA).

This sequence to M.tuberculosis Rv1591.

Its subcellular location is the cell membrane. This is an uncharacterized protein from Mycobacterium leprae (strain TN).